We begin with the raw amino-acid sequence, 620 residues long: Chaperone protein HscA homolog (620 aa).

It belongs to the heat shock protein 70 family.

Functionally, chaperone involved in the maturation of iron-sulfur cluster-containing proteins. Has a low intrinsic ATPase activity which is markedly stimulated by HscB. This chain is Chaperone protein HscA homolog, found in Pseudomonas entomophila (strain L48).